The chain runs to 90 residues: MNKTQLIDVIADKADLSKAQAKLALESTLAAITESLKEGDAVQLVGFGTFKVNHRSERTGRNPQTGKEIKIAAANVPAFVSGKALKDAVK.

The protein belongs to the bacterial histone-like protein family. Heterodimer of an alpha and a beta chain.

Histone-like DNA-binding protein which is capable of wrapping DNA to stabilize it, and thus to prevent its denaturation under extreme environmental conditions. This chain is DNA-binding protein HU-alpha (hupA), found in Serratia marcescens.